The primary structure comprises 193 residues: Cilia- and flagella-associated protein 20 (193 aa).

It belongs to the CFAP20 family. Microtubule inner protein component of sperm flagellar doublet microtubules.

It localises to the nucleus. It is found in the cytoplasm. The protein localises to the cytoskeleton. Its subcellular location is the microtubule organizing center. The protein resides in the centrosome. It localises to the centriole. It is found in the cilium basal body. The protein localises to the cilium axoneme. Its subcellular location is the flagellum axoneme. Functionally, cilium- and flagellum-specific protein that plays a role in axonemal structure organization and motility. Microtubule inner protein (MIP) part of the dynein-decorated doublet microtubules (DMTs) in cilia axoneme, which is required for motile cilia beating. Involved in the regulation of the size and morphology of cilia. Required for axonemal microtubules polyglutamylation. The protein is Cilia- and flagella-associated protein 20 of Homo sapiens (Human).